Here is a 264-residue protein sequence, read N- to C-terminus: Apolipoprotein A-I (264 aa).

Residues 1-18 (MKAVVLALAVLFLTGSQA) form the signal peptide. 2 repeat units span residues 67–88 (LHLL…EQLG) and 89–110 (PVTH…QEMN). The 10 X approximate tandem repeats stretch occupies residues 67–264 (LHLLDNWDTL…DEASKKLNAQ (198 aa)). Residue Met109 is modified to Methionine sulfoxide. Residues 111-121 (KDLEEVKVKVQ) form a 3; half-length repeat. A run of 5 repeats spans residues 122–143 (PYLD…EKVG), 144–165 (PLGA…EKLT), 166–187 (PLGE…TQLA), 188–207 (PYSD…IRDS), and 208–229 (PSLA…EKAK). The 9; half-length repeat unit spans residues 230 to 240 (PALEDLRQGLM). Copy 10 of the repeat occupies 241–264 (PVLENLKTTVLAAIDEASKKLNAQ).

It belongs to the apolipoprotein A1/A4/E family. Homodimer. Interacts with APOA1BP and CLU. Component of a sperm activating protein complex (SPAP), consisting of APOA1, an immunoglobulin heavy chain, an immunoglobulin light chain and albumin. Interacts with NDRG1. Interacts with SCGB3A2. Interacts with NAXE and YJEFN3. Glycosylated. Post-translationally, palmitoylated. In terms of processing, phosphorylation sites are present in the extracellular medium.

Its subcellular location is the secreted. Participates in the reverse transport of cholesterol from tissues to the liver for excretion by promoting cholesterol efflux from tissues and by acting as a cofactor for the lecithin cholesterol acyltransferase (LCAT). As part of the SPAP complex, activates spermatozoa motility. This chain is Apolipoprotein A-I (APOA1), found in Jaculus jaculus (Lesser Egyptian jerboa).